Reading from the N-terminus, the 147-residue chain is Histidine-containing phosphotransfer protein 1 (147 aa).

The 96-residue stretch at 38 to 133 (APDFVSEVVT…YDLRNKFQAM (96 aa)) folds into the HPt domain. His79 carries the phosphohistidine modification.

In terms of processing, two-component system major event consists of a His-to-Asp phosphorelay between a sensor histidine kinase (HK) and a response regulator (RR). In plants, the His-to-Asp phosphorelay involves an additional intermediate named Histidine-containing phosphotransfer protein (HPt). This multistep phosphorelay consists of a His-Asp-His-Asp sequential transfer of a phosphate group between first a His and an Asp of the HK protein, followed by the transfer to a conserved His of the HPt protein and finally the transfer to an Asp in the receiver domain of the RR protein. In terms of tissue distribution, widely expressed.

Its subcellular location is the cytoplasm. It localises to the cytosol. The protein resides in the nucleus. In terms of biological role, functions as a two-component phosphorelay mediators between cytokinin sensor histidine kinases and response regulators (B-type ARRs). Plays an important role in propagating cytokinin signal transduction through the multistep His-to-Asp phosphorelay. Functions as a positive regulator of the cytokinin signaling pathway. May play a regulatory role in salt and drought tolerance during plant development. The protein is Histidine-containing phosphotransfer protein 1 of Oryza sativa subsp. japonica (Rice).